Here is a 149-residue protein sequence, read N- to C-terminus: MKKVIIYTDGACRGNGQENTIGAYGIVLMYGEHKKEIKKAFRDTTNNIMELSAVVEALSLLKEPCSIELYSDSAYVINAINQKWLDNWKKNNWKTASKSPVKNKELWEKLDELLKKHSVKFIKVKGHSDNEYNNRCDKLANEAMDEFNV.

The region spanning 1 to 145 (MKKVIIYTDG…CDKLANEAMD (145 aa)) is the RNase H type-1 domain. Aspartate 9, glutamate 50, aspartate 72, and aspartate 137 together coordinate Mg(2+).

This sequence belongs to the RNase H family. Monomer. Mg(2+) is required as a cofactor.

It is found in the cytoplasm. It carries out the reaction Endonucleolytic cleavage to 5'-phosphomonoester.. In terms of biological role, endonuclease that specifically degrades the RNA of RNA-DNA hybrids. The protein is Ribonuclease H of Clostridium botulinum (strain ATCC 19397 / Type A).